A 284-amino-acid polypeptide reads, in one-letter code: Diaminopimelate epimerase (284 aa).

Asn-20, Gln-53, and Asn-73 together coordinate substrate. Catalysis depends on Cys-82, which acts as the Proton donor. Residues 83-84 (GN), Asn-167, Asn-200, and 218-219 (ER) contribute to the substrate site. Cys-227 functions as the Proton acceptor in the catalytic mechanism. 228 to 229 (GS) serves as a coordination point for substrate.

The protein belongs to the diaminopimelate epimerase family. As to quaternary structure, homodimer.

It is found in the cytoplasm. The enzyme catalyses (2S,6S)-2,6-diaminopimelate = meso-2,6-diaminopimelate. It functions in the pathway amino-acid biosynthesis; L-lysine biosynthesis via DAP pathway; DL-2,6-diaminopimelate from LL-2,6-diaminopimelate: step 1/1. Its function is as follows. Catalyzes the stereoinversion of LL-2,6-diaminopimelate (L,L-DAP) to meso-diaminopimelate (meso-DAP), a precursor of L-lysine and an essential component of the bacterial peptidoglycan. This Xylella fastidiosa (strain 9a5c) protein is Diaminopimelate epimerase.